Reading from the N-terminus, the 161-residue chain is NADH-quinone oxidoreductase subunit I (161 aa).

4Fe-4S ferredoxin-type domains lie at 53 to 82 and 92 to 121; these read RRYP…IEAE and TRYD…EGPN. Positions 62, 65, 68, 72, 101, 104, 107, and 111 each coordinate [4Fe-4S] cluster.

The protein belongs to the complex I 23 kDa subunit family. In terms of assembly, NDH-1 is composed of 14 different subunits. Subunits NuoA, H, J, K, L, M, N constitute the membrane sector of the complex. The cofactor is [4Fe-4S] cluster.

The protein resides in the cell inner membrane. The enzyme catalyses a quinone + NADH + 5 H(+)(in) = a quinol + NAD(+) + 4 H(+)(out). Functionally, NDH-1 shuttles electrons from NADH, via FMN and iron-sulfur (Fe-S) centers, to quinones in the respiratory chain. The immediate electron acceptor for the enzyme in this species is believed to be ubiquinone. Couples the redox reaction to proton translocation (for every two electrons transferred, four hydrogen ions are translocated across the cytoplasmic membrane), and thus conserves the redox energy in a proton gradient. The chain is NADH-quinone oxidoreductase subunit I from Hyphomonas neptunium (strain ATCC 15444).